The sequence spans 269 residues: uncharacterized protein (269 aa).

Residues 12-19 and 130-137 each bind ATP; these read GKGGTGKS and GYLIVGKS.

It to M.jannaschii MJ0578.

This is an uncharacterized protein from Methanocaldococcus jannaschii (strain ATCC 43067 / DSM 2661 / JAL-1 / JCM 10045 / NBRC 100440) (Methanococcus jannaschii).